Reading from the N-terminus, the 308-residue chain is Porphobilinogen deaminase (308 aa).

Cys-240 is subject to S-(dipyrrolylmethanemethyl)cysteine.

The protein belongs to the HMBS family. In terms of assembly, monomer. Dipyrromethane serves as cofactor.

The enzyme catalyses 4 porphobilinogen + H2O = hydroxymethylbilane + 4 NH4(+). The protein operates within porphyrin-containing compound metabolism; protoporphyrin-IX biosynthesis; coproporphyrinogen-III from 5-aminolevulinate: step 2/4. In terms of biological role, tetrapolymerization of the monopyrrole PBG into the hydroxymethylbilane pre-uroporphyrinogen in several discrete steps. The sequence is that of Porphobilinogen deaminase from Maridesulfovibrio salexigens (strain ATCC 14822 / DSM 2638 / NCIMB 8403 / VKM B-1763) (Desulfovibrio salexigens).